A 201-amino-acid polypeptide reads, in one-letter code: Holliday junction branch migration complex subunit RuvA (201 aa).

A domain I region spans residues 1 to 64; the sequence is MIGRLRGTLA…EDAQLLYGFA (64 aa). The interval 65–143 is domain II; the sequence is EKRERELFRE…AWESMPAIAT (79 aa). The tract at residues 144 to 152 is flexible linker; sequence LVVEPGSKT. The tract at residues 153–201 is domain III; the sequence is AVTSAENDAVSALISLGFKPQEASRAVSAIQEENLSSEEMIRRALKGMV.

The protein belongs to the RuvA family. Homotetramer. Forms an RuvA(8)-RuvB(12)-Holliday junction (HJ) complex. HJ DNA is sandwiched between 2 RuvA tetramers; dsDNA enters through RuvA and exits via RuvB. An RuvB hexamer assembles on each DNA strand where it exits the tetramer. Each RuvB hexamer is contacted by two RuvA subunits (via domain III) on 2 adjacent RuvB subunits; this complex drives branch migration. In the full resolvosome a probable DNA-RuvA(4)-RuvB(12)-RuvC(2) complex forms which resolves the HJ.

It localises to the cytoplasm. The RuvA-RuvB-RuvC complex processes Holliday junction (HJ) DNA during genetic recombination and DNA repair, while the RuvA-RuvB complex plays an important role in the rescue of blocked DNA replication forks via replication fork reversal (RFR). RuvA specifically binds to HJ cruciform DNA, conferring on it an open structure. The RuvB hexamer acts as an ATP-dependent pump, pulling dsDNA into and through the RuvAB complex. HJ branch migration allows RuvC to scan DNA until it finds its consensus sequence, where it cleaves and resolves the cruciform DNA. This Stutzerimonas stutzeri (strain A1501) (Pseudomonas stutzeri) protein is Holliday junction branch migration complex subunit RuvA.